Consider the following 870-residue polypeptide: Alanine--tRNA ligase (870 aa).

Zn(2+) contacts are provided by His-585, His-589, Cys-689, and His-693.

It belongs to the class-II aminoacyl-tRNA synthetase family. Requires Zn(2+) as cofactor.

It localises to the cytoplasm. It catalyses the reaction tRNA(Ala) + L-alanine + ATP = L-alanyl-tRNA(Ala) + AMP + diphosphate. Catalyzes the attachment of alanine to tRNA(Ala) in a two-step reaction: alanine is first activated by ATP to form Ala-AMP and then transferred to the acceptor end of tRNA(Ala). Also edits incorrectly charged Ser-tRNA(Ala) and Gly-tRNA(Ala) via its editing domain. In Picrophilus torridus (strain ATCC 700027 / DSM 9790 / JCM 10055 / NBRC 100828 / KAW 2/3), this protein is Alanine--tRNA ligase.